Reading from the N-terminus, the 207-residue chain is dITP/XTP pyrophosphatase (207 aa).

11–16 (TGNPGK) provides a ligand contact to substrate. Residue Asp-72 is the Proton acceptor of the active site. Residue Asp-72 coordinates Mg(2+). Substrate is bound by residues Ser-73, 154–157 (FGYD), Lys-177, and 182–183 (HR).

Belongs to the HAM1 NTPase family. In terms of assembly, homodimer. The cofactor is Mg(2+).

The enzyme catalyses XTP + H2O = XMP + diphosphate + H(+). The catalysed reaction is dITP + H2O = dIMP + diphosphate + H(+). It carries out the reaction ITP + H2O = IMP + diphosphate + H(+). In terms of biological role, pyrophosphatase that catalyzes the hydrolysis of nucleoside triphosphates to their monophosphate derivatives, with a high preference for the non-canonical purine nucleotides XTP (xanthosine triphosphate), dITP (deoxyinosine triphosphate) and ITP. Seems to function as a house-cleaning enzyme that removes non-canonical purine nucleotides from the nucleotide pool, thus preventing their incorporation into DNA/RNA and avoiding chromosomal lesions. The sequence is that of dITP/XTP pyrophosphatase from Thermus thermophilus (strain ATCC BAA-163 / DSM 7039 / HB27).